Reading from the N-terminus, the 433-residue chain is Adenosylhomocysteinase A (433 aa).

The substrate site is built by Thr57, Asp132, Glu157, Lys187, and Asp191. Residues 184 to 351 (SVTKSKFDNL…EGRLVNLGCA (168 aa)) form an NAD binding region.

This sequence belongs to the adenosylhomocysteinase family. In terms of assembly, homotetramer. Requires NAD(+) as cofactor.

Its subcellular location is the cytoplasm. It carries out the reaction S-adenosyl-L-homocysteine + H2O = L-homocysteine + adenosine. It functions in the pathway amino-acid biosynthesis; L-homocysteine biosynthesis; L-homocysteine from S-adenosyl-L-homocysteine: step 1/1. Its function is as follows. Catalyzes the hydrolysis of S-adenosyl-L-homocysteine to form adenosine and homocysteine. Binds copper ions. This Xenopus laevis (African clawed frog) protein is Adenosylhomocysteinase A (ahcy-a).